Here is a 400-residue protein sequence, read N- to C-terminus: Flavo-diiron protein FprA2 (400 aa).

The interval G32–A216 is zinc metallo-hydrolase. 6 residues coordinate Fe cation: H79, E81, D83, H147, D166, and H226. The region spanning I257 to A397 is the Flavodoxin-like domain. Residues S263–N267 and A345–Q372 contribute to the FMN site.

This sequence in the N-terminal section; belongs to the zinc metallo-hydrolase group 3 family. As to quaternary structure, homotetramer. The cofactor is FMN. Fe cation serves as cofactor.

The catalysed reaction is 2 NADH + O2 + 2 H(+) = 2 NAD(+) + 2 H2O. Functionally, catalyzes the four-electron reduction of molecular oxygen to water. In fact, functions as the terminal component of an NADH oxidase (NADH:O(2) oxidoreductase) when using NADH:rubredoxin oxidoreductase (NROR) and rubredoxin (Rd) as electron transport intermediaries between NADH and FDP. Is thus able to reductively scavenge intracellular dioxygen and is part of an oxidative stress defense system in C.acetobutylicum, an obligate anaerobic bacterium. Can also serve as the terminal component of an NADH:nitric oxide oxidoreductase (NOR) with a catalytic efficiency comparable to that of its NADH oxidase activity, and therefore might have an in vivo role in scavenging nitric oxide. The chain is Flavo-diiron protein FprA2 (fprA2) from Clostridium acetobutylicum (strain ATCC 824 / DSM 792 / JCM 1419 / IAM 19013 / LMG 5710 / NBRC 13948 / NRRL B-527 / VKM B-1787 / 2291 / W).